We begin with the raw amino-acid sequence, 254 residues long: 3-deoxy-manno-octulosonate cytidylyltransferase (254 aa).

This sequence belongs to the KdsB family.

Its subcellular location is the cytoplasm. It carries out the reaction 3-deoxy-alpha-D-manno-oct-2-ulosonate + CTP = CMP-3-deoxy-beta-D-manno-octulosonate + diphosphate. Its pathway is nucleotide-sugar biosynthesis; CMP-3-deoxy-D-manno-octulosonate biosynthesis; CMP-3-deoxy-D-manno-octulosonate from 3-deoxy-D-manno-octulosonate and CTP: step 1/1. It participates in bacterial outer membrane biogenesis; lipopolysaccharide biosynthesis. Its function is as follows. Activates KDO (a required 8-carbon sugar) for incorporation into bacterial lipopolysaccharide in Gram-negative bacteria. This Chlamydia pneumoniae (Chlamydophila pneumoniae) protein is 3-deoxy-manno-octulosonate cytidylyltransferase.